A 297-amino-acid chain; its full sequence is MRFGFLLNEVLTGFRRNVTMTIAMILTTAISVGLFGGGMLVVRLADSSRAIYLDRVESQVFLTEDVSANDSSCDTTACKALREKIETRSDVKAVRFLNRQQAYDDAIRKFPQFKDVAGKDSFPASFIVKLENPEQHKDFDTAMKGQPGVLDVLNQKELIDRLFAVLDGLSNAAFAVALVQAIGAILLIANMVQVAAYTRRTEIGIMRLVGASRWYTQLPFLVEAMLAATMGVGIAVAGLMVVRALFLENALNQFYQANLIAKVDYADILFITPWLLLLGVAMSGLTAYLTLRLYVRR.

Over 1–21 (MRFGFLLNEVLTGFRRNVTMT) the chain is Cytoplasmic. Residues 22–42 (IAMILTTAISVGLFGGGMLVV) form a helical membrane-spanning segment. At 43–171 (RLADSSRAIY…LFAVLDGLSN (129 aa)) the chain is on the extracellular side. The helical transmembrane segment at 172-192 (AAFAVALVQAIGAILLIANMV) threads the bilayer. Over 193–219 (QVAAYTRRTEIGIMRLVGASRWYTQLP) the chain is Cytoplasmic. The chain crosses the membrane as a helical span at residues 220-240 (FLVEAMLAATMGVGIAVAGLM). Residues 241–267 (VVRALFLENALNQFYQANLIAKVDYAD) are Extracellular-facing. A helical transmembrane segment spans residues 268 to 288 (ILFITPWLLLLGVAMSGLTAY). The Cytoplasmic portion of the chain corresponds to 289–297 (LTLRLYVRR).

The protein belongs to the ABC-4 integral membrane protein family. FtsX subfamily. As to quaternary structure, forms a membrane-associated complex with FtsE.

Its subcellular location is the cell membrane. Its function is as follows. Part of the ABC transporter FtsEX involved in cellular division. In Mycobacterium tuberculosis (strain ATCC 25177 / H37Ra), this protein is Cell division protein FtsX.